The sequence spans 913 residues: Sterol uptake control protein 2 (913 aa).

Positions 50-80 form a DNA-binding region, zn(2)-C6 fungal-type; sequence GCDNCKRRRVKCDEGKPACRKCTNMKLECQY. Disordered regions lie at residues 103–173 and 216–258; these read GSVE…SMGL and GNMG…LAGS. At T122 the chain carries Phosphothreonine. Residues 150-164 show a composition bias toward basic and acidic residues; that stretch reads SESEEKSSAPIEDKN. Low complexity predominate over residues 222 to 241; the sequence is QLQQQQQVQQQSQPQTQAQQ. The stretch at 303–346 forms a coiled coil; the sequence is QQHQQVQLQQYQQLRQEQHQQVQQQQQEQLQQYQQHFLQQQQQV. Disordered stretches follow at residues 347–385 and 453–489; these read LLQQ…TLNS and MQEH…GSAS. The segment covering 374–385 has biased composition (polar residues); sequence LQSQTSETTLNS. Residues 440 to 472 are a coiled coil; sequence ATKASNAEEALANMQEHHERAAASVKENDGQLS. Residues 454–468 show a composition bias toward basic and acidic residues; sequence QEHHERAAASVKEND. Residues 469 to 487 show a composition bias toward polar residues; sequence GQLSDTKSPAPSNNAQGGS. A Phosphoserine modification is found at S519. Residues 552-562 are compositionally biased toward polar residues; it reads EPTISLQTSQT. The disordered stretch occupies residues 552–571; the sequence is EPTISLQTSQTENEDDASRQ.

The protein resides in the nucleus. Transcription factor that is involved in activation of anaerobic genes such as DAN/TIR cell wall mannoprotein genes and YML083c. Appears to bind to anaerobic response elements (AR1) with the consensus sequence 5'-TCGTTYAG-3' present in the promoter regions of DAN/TIR genes. Involved in sterol uptake and regulation of the sterol biosynthesis. Binds to sterol regulatory elements (SRE) with the consensus sequence 5'-TCGTATA-3' present in ERG2 and ERG3 promoters. May be involved in down-regulation of CWP2 during anaerobic adaptation. The sequence is that of Sterol uptake control protein 2 (UPC2) from Saccharomyces cerevisiae (strain ATCC 204508 / S288c) (Baker's yeast).